The following is a 724-amino-acid chain: Golgin subfamily A member 6-like protein 6 (724 aa).

Disordered regions lie at residues 1 to 108 (MLMW…HQEA), 314 to 342 (QEEK…MRRQ), 374 to 454 (MHEQ…EMWR), 517 to 548 (QEEM…KMWR), and 561 to 724 (WRQE…MQEH). Residues 15–29 (LPTHPHLPTHPHLPT) are compositionally biased toward basic residues. The segment covering 39–60 (MSKETRQSKLAEAKEQLTDHHP) has biased composition (basic and acidic residues). Polar residues-rich tracts occupy residues 61-71 (QTNPSVGTAAS) and 79-91 (NNGT…TSGG). Positions 94 to 108 (SPEDEQKASHQHQEA) are enriched in basic and acidic residues. Residues 164–686 (ELEQALSAVA…EKMWEQEEKM (523 aa)) adopt a coiled-coil conformation.

Belongs to the GOLGA6 family.

This Homo sapiens (Human) protein is Golgin subfamily A member 6-like protein 6 (GOLGA6L6).